The chain runs to 79 residues: Dolichyl-diphosphooligosaccharide--protein glycosyltransferase subunit TMEM258 (79 aa).

Methionine 1 carries the N-acetylmethionine modification. The Lumenal segment spans residues 1 to 16 (MELEAMSRYTSPVNPA). A helical membrane pass occupies residues 17–37 (VFPHLTVVLLAIGMFFTAWFF). Over 38 to 54 (VYEVTSTKYTRDICKEL) the chain is Cytoplasmic. A helical transmembrane segment spans residues 55–75 (LISLVASLFMGFGVLFLLLWV). Residues 76 to 79 (GIYV) are Lumenal-facing.

It belongs to the OST5 family. As to quaternary structure, component of the oligosaccharyltransferase (OST) complex. OST exists in two different complex forms which contain common core subunits RPN1, RPN2, OST48, OST4, DAD1 and TMEM258, either STT3A or STT3B as catalytic subunits, and form-specific accessory subunits. STT3A complex assembly occurs through the formation of 3 subcomplexes. Subcomplex 1 contains RPN1 and TMEM258, subcomplex 2 contains the STT3A-specific subunits STT3A, DC2/OSTC, and KCP2 as well as the core subunit OST4, and subcomplex 3 contains RPN2, DAD1, and OST48. The STT3A complex can form stable complexes with the Sec61 complex or with both the Sec61 and TRAP complexes.

The protein localises to the membrane. The protein resides in the endoplasmic reticulum. It localises to the cytoplasm. The protein operates within protein modification; protein glycosylation. In terms of biological role, subunit of the oligosaccharyl transferase (OST) complex that catalyzes the initial transfer of a defined glycan (Glc(3)Man(9)GlcNAc(2) in eukaryotes) from the lipid carrier dolichol-pyrophosphate to an asparagine residue within an Asn-X-Ser/Thr consensus motif in nascent polypeptide chains, the first step in protein N-glycosylation. N-glycosylation occurs cotranslationally and the complex associates with the Sec61 complex at the channel-forming translocon complex that mediates protein translocation across the endoplasmic reticulum (ER). All subunits are required for a maximal enzyme activity. This is Dolichyl-diphosphooligosaccharide--protein glycosyltransferase subunit TMEM258 from Canis lupus familiaris (Dog).